A 265-amino-acid chain; its full sequence is tRNA pseudouridine synthase A (265 aa).

The active-site Nucleophile is the D58. Y116 is a binding site for substrate.

The protein belongs to the tRNA pseudouridine synthase TruA family. As to quaternary structure, homodimer.

The enzyme catalyses uridine(38/39/40) in tRNA = pseudouridine(38/39/40) in tRNA. Formation of pseudouridine at positions 38, 39 and 40 in the anticodon stem and loop of transfer RNAs. This is tRNA pseudouridine synthase A from Neisseria gonorrhoeae (strain NCCP11945).